The following is a 252-amino-acid chain: Trans-aconitate 2-methyltransferase (252 aa).

The protein belongs to the methyltransferase superfamily. Tam family.

It is found in the cytoplasm. The catalysed reaction is trans-aconitate + S-adenosyl-L-methionine = (E)-3-(methoxycarbonyl)pent-2-enedioate + S-adenosyl-L-homocysteine. Functionally, catalyzes the S-adenosylmethionine monomethyl esterification of trans-aconitate. The polypeptide is Trans-aconitate 2-methyltransferase (Shigella flexneri).